The following is a 92-amino-acid chain: Small ribosomal subunit protein uS19 (92 aa).

It belongs to the universal ribosomal protein uS19 family.

Its function is as follows. Protein S19 forms a complex with S13 that binds strongly to the 16S ribosomal RNA. The protein is Small ribosomal subunit protein uS19 of Acaryochloris marina (strain MBIC 11017).